We begin with the raw amino-acid sequence, 721 residues long: Translation initiation factor eIF2B subunit epsilon (721 aa).

Over residues 1-13 (MAAPVVAPPGVVV) the composition is skewed to low complexity. Residues 1–40 (MAAPVVAPPGVVVSRANKRSGAGPGGSGGGGARGAEEEPP) form a disordered region. A2 carries the post-translational modification N-acetylalanine. R19 carries the post-translational modification Omega-N-methylarginine. Over residues 22–33 (AGPGGSGGGGAR) the composition is skewed to gly residues. Phosphoserine is present on S27. Residues K61 and K103 each participate in a glycyl lysine isopeptide (Lys-Gly) (interchain with G-Cter in ubiquitin) cross-link. Residue S130 is modified to Phosphoserine. Residues K141 and K217 each participate in a glycyl lysine isopeptide (Lys-Gly) (interchain with G-Cter in ubiquitin) cross-link. At T322 the chain carries Phosphothreonine. Disordered regions lie at residues 444–483 (PEGS…MKGY) and 523–547 (EESE…SPQM). A phosphoserine mark is found at S450, S466, S469, S532, and S540. Acidic residues-rich tracts occupy residues 456–471 (AEED…DSGA) and 523–537 (EESE…DSEE). A W2 domain is found at 543-720 (GSPQMDDIKV…KEAEEESSED (178 aa)). At S544 the chain carries Phosphoserine; by DYRK2. S717 carries the post-translational modification Phosphoserine.

The protein belongs to the eIF-2B gamma/epsilon subunits family. In terms of assembly, component of the translation initiation factor 2B (eIF2B) complex which is a heterodecamer of two sets of five different subunits: alpha, beta, gamma, delta and epsilon. Subunits alpha, beta and delta comprise a regulatory subcomplex and subunits epsilon and gamma comprise a catalytic subcomplex. Within the complex, the hexameric regulatory complex resides at the center, with the two heterodimeric catalytic subcomplexes bound on opposite sides. In terms of processing, phosphorylated at Ser-544 by DYRK2; this is required for subsequent phosphorylation by GSK3B. Phosphorylated on serine and threonine residues by GSK3B; phosphorylation inhibits its function. Post-translationally, polyubiquitinated, probably by NEDD4.

The protein localises to the cytoplasm. The protein resides in the cytosol. Activated by the chemical integrated stress response (ISR) inhibitor ISRIB which stimulates guanine nucleotide exchange factor activity for both phosphorylated and unphosphorylated eIF2. Functionally, acts as a component of the translation initiation factor 2B (eIF2B) complex, which catalyzes the exchange of GDP for GTP on eukaryotic initiation factor 2 (eIF2) gamma subunit. Its guanine nucleotide exchange factor activity is repressed when bound to eIF2 complex phosphorylated on the alpha subunit, thereby limiting the amount of methionyl-initiator methionine tRNA available to the ribosome and consequently global translation is repressed. The polypeptide is Translation initiation factor eIF2B subunit epsilon (EIF2B5) (Homo sapiens (Human)).